The primary structure comprises 302 residues: Taste receptor type 2 member 104 (302 aa).

The Extracellular portion of the chain corresponds to 1 to 7 (MLSMLES). Residues 8 to 28 (ILLSVATSEAMLGILGNIFIV) form a helical membrane-spanning segment. Over 29–43 (LVNCTNWVRNKKLSK) the chain is Cytoplasmic. The helical transmembrane segment at 44–64 (INFILTGLAISRVFTIWIITL) threads the bilayer. Residues 65 to 87 (DAYTKVFFLTTLMPSNLHECISY) are Extracellular-facing. A helical membrane pass occupies residues 88–108 (IWVIINHLSVWFATSLSIFYF). Residues 109–128 (LKIANFSHYIFLWLKRRADK) are Cytoplasmic-facing. A helical membrane pass occupies residues 129–149 (VFVFLIGYLIITWLASFPLAV). The Extracellular segment spans residues 150-182 (TVIKNIKVHHNNTSWLIQLEKRELLINYVFANM). 2 N-linked (GlcNAc...) asparagine glycosylation sites follow: N160 and N161. The chain crosses the membrane as a helical span at residues 183–203 (GPISLFMVAVFTCFLLTISLW). The Cytoplasmic portion of the chain corresponds to 204–233 (RHRRRMQSTGSKFRDLNTEVHVKAMKVLIS). The chain crosses the membrane as a helical span at residues 234–254 (FIILFILYFMGVLIETLCLFL). Topologically, residues 255 to 257 (TEN) are extracellular. The helical transmembrane segment at 258-278 (ILLFIFGFTLSSTYPCCHSFI) threads the bilayer. Topologically, residues 279-302 (LILTSRELKQASMRALQRLKCCET) are cytoplasmic.

It belongs to the G-protein coupled receptor T2R family.

The protein resides in the membrane. Functionally, putative taste receptor which may play a role in the perception of bitterness. This Rattus norvegicus (Rat) protein is Taste receptor type 2 member 104.